The sequence spans 131 residues: Small ribosomal subunit protein uS8 (131 aa).

The protein belongs to the universal ribosomal protein uS8 family. In terms of assembly, part of the 30S ribosomal subunit. Contacts proteins S5 and S12.

One of the primary rRNA binding proteins, it binds directly to 16S rRNA central domain where it helps coordinate assembly of the platform of the 30S subunit. This Methylobacillus flagellatus (strain ATCC 51484 / DSM 6875 / VKM B-1610 / KT) protein is Small ribosomal subunit protein uS8.